Consider the following 396-residue polypeptide: Calsequestrin-1 (396 aa).

Residues 1–34 (MSATDRMGPRAVPGLRLALLLLLVLGTPKSGVQG) form the signal peptide. At Tyr43 the chain carries Phosphotyrosine. Ser81 is modified (phosphoserine). Thr124 carries the post-translational modification Phosphothreonine. The residue at position 216 (Ser216) is a Phosphoserine. A glycan (N-linked (GlcNAc...) asparagine) is linked at Asn350.

Belongs to the calsequestrin family. In terms of assembly, monomer; increases in response to a depletion of intracellular calcium. Homodimer. Homotetramer and homopolymer. Can form linear homooligomers. Ca(2+) ions promote oligomerization. Interacts (via C-terminal end and preferentially with the monomeric form) with STIM1; this interaction increases in response to a depletion of intracellular calcium, decreases both STIM1 aggregation and clustering, interaction of STIM1 with ORAI1 and store-operated Ca(2+) entry (SOCE) activity. Interacts with ASPH and TRDN. In terms of processing, N-glycosylated. Expressed in myoblasts (at protein level).

The protein localises to the endoplasmic reticulum. Its subcellular location is the sarcoplasmic reticulum. The protein resides in the sarcoplasmic reticulum lumen. It is found in the sarcoplasmic reticulum membrane. It localises to the mitochondrion matrix. In terms of biological role, calsequestrin is a high-capacity, moderate affinity, calcium-binding protein and thus acts as an internal calcium store in muscle. Calcium ions are bound by clusters of acidic residues at the protein surface, often at the interface between subunits. Can bind around 80 Ca(2+) ions. Regulates the release of lumenal Ca(2+) via the calcium release channel RYR1; this plays an important role in triggering muscle contraction. Negatively regulates store-operated Ca(2+) entry (SOCE) activity. This chain is Calsequestrin-1 (CASQ1), found in Homo sapiens (Human).